Reading from the N-terminus, the 317-residue chain is 4-hydroxy-3-methylbut-2-enyl diphosphate reductase (317 aa).

Cys12 provides a ligand contact to [4Fe-4S] cluster. (2E)-4-hydroxy-3-methylbut-2-enyl diphosphate is bound by residues His41 and His74. The dimethylallyl diphosphate site is built by His41 and His74. Isopentenyl diphosphate is bound by residues His41 and His74. Cys97 contacts [4Fe-4S] cluster. His125 contacts (2E)-4-hydroxy-3-methylbut-2-enyl diphosphate. His125 is a dimethylallyl diphosphate binding site. His125 is an isopentenyl diphosphate binding site. The active-site Proton donor is Glu127. Thr168 contributes to the (2E)-4-hydroxy-3-methylbut-2-enyl diphosphate binding site. Cys198 is a [4Fe-4S] cluster binding site. Residues Ser226, Ser227, Asn228, and Ser270 each coordinate (2E)-4-hydroxy-3-methylbut-2-enyl diphosphate. 4 residues coordinate dimethylallyl diphosphate: Ser226, Ser227, Asn228, and Ser270. Isopentenyl diphosphate-binding residues include Ser226, Ser227, Asn228, and Ser270.

The protein belongs to the IspH family. In terms of assembly, homodimer. [4Fe-4S] cluster is required as a cofactor.

It catalyses the reaction isopentenyl diphosphate + 2 oxidized [2Fe-2S]-[ferredoxin] + H2O = (2E)-4-hydroxy-3-methylbut-2-enyl diphosphate + 2 reduced [2Fe-2S]-[ferredoxin] + 2 H(+). It carries out the reaction dimethylallyl diphosphate + 2 oxidized [2Fe-2S]-[ferredoxin] + H2O = (2E)-4-hydroxy-3-methylbut-2-enyl diphosphate + 2 reduced [2Fe-2S]-[ferredoxin] + 2 H(+). It functions in the pathway isoprenoid biosynthesis; dimethylallyl diphosphate biosynthesis; dimethylallyl diphosphate from (2E)-4-hydroxy-3-methylbutenyl diphosphate: step 1/1. Its pathway is isoprenoid biosynthesis; isopentenyl diphosphate biosynthesis via DXP pathway; isopentenyl diphosphate from 1-deoxy-D-xylulose 5-phosphate: step 6/6. Catalyzes the conversion of 1-hydroxy-2-methyl-2-(E)-butenyl 4-diphosphate (HMBPP) into a mixture of isopentenyl diphosphate (IPP) and dimethylallyl diphosphate (DMAPP). Acts in the terminal step of the DOXP/MEP pathway for isoprenoid precursor biosynthesis. The protein is 4-hydroxy-3-methylbut-2-enyl diphosphate reductase of Edwardsiella ictaluri (strain 93-146).